The chain runs to 315 residues: Epithelial cell adhesion molecule (315 aa).

The N-terminal stretch at 1–23 is a signal peptide; it reads MAGPQALAFGLLLAVVTATLAAA. Residues 24–266 lie on the Extracellular side of the membrane; the sequence is QRDCVCDNYK…APEFSMQGLT (243 aa). Disulfide bonds link C27-C46, C29-C59, C38-C48, C66-C99, C110-C116, and C118-C135. The region spanning 63–135 is the Thyroglobulin type-1 domain; it reads ASKCLAMKAE…RTDKDTEITC (73 aa). N111 carries N-linked (GlcNAc...) asparagine glycosylation. An N-linked (GlcNAc...) asparagine glycan is attached at N198. The chain crosses the membrane as a helical span at residues 267 to 289; that stretch reads AGIIAVIVVVSLAVIAGIVVLVI. Residues 290-315 are Cytoplasmic-facing; sequence STRKKSAKYEKAEIKEMGEIHRELNA.

The protein belongs to the EPCAM family. In terms of assembly, monomer. Interacts with phosphorylated CLDN7. In terms of processing, glycosylation at Asn-198 is crucial for protein stability.

The protein localises to the lateral cell membrane. It is found in the cell junction. Its subcellular location is the tight junction. May act as a physical homophilic interaction molecule between intestinal epithelial cells (IECs) and intraepithelial lymphocytes (IELs) at the mucosal epithelium for providing immunological barrier as a first line of defense against mucosal infection. Plays a role in embryonic stem cells proliferation and differentiation. Up-regulates the expression of FABP5, MYC and cyclins A and E. In Mus musculus (Mouse), this protein is Epithelial cell adhesion molecule (Epcam).